Consider the following 288-residue polypeptide: Keratin-associated protein 5-4 (288 aa).

9 consecutive repeat copies span residues 49–52, 55–58, 61–64, 201–204, 220–223, 239–242, 249–252, 268–271, and 278–281. A 9 X 4 AA repeats of C-C-X-P region spans residues 49–281; the sequence is CCVPICCCKP…CCSQSSCCVP (233 aa).

This sequence belongs to the KRTAP type 5 family. In terms of assembly, interacts with hair keratins. As to expression, restricted to hair root, not detected in any other tissues.

In terms of biological role, in the hair cortex, hair keratin intermediate filaments are embedded in an interfilamentous matrix, consisting of hair keratin-associated protein (KRTAP), which are essential for the formation of a rigid and resistant hair shaft through their extensive disulfide bond cross-linking with abundant cysteine residues of hair keratins. The matrix proteins include the high-sulfur and high-glycine-tyrosine keratins. The sequence is that of Keratin-associated protein 5-4 (KRTAP5-4) from Homo sapiens (Human).